A 459-amino-acid chain; its full sequence is Sperm microtubule associated protein 2-like (459 aa).

The segment at 1–138 (MEEGDFSGSS…QEDGKDDLFP (138 aa)) is disordered. The span at 21–30 (TTTTTETRTT) shows a compositional bias: low complexity. Residues 47-63 (NGDEAEAVGEEGQEEDY) are compositionally biased toward acidic residues. The segment covering 64–73 (EGSKTHKSHE) has biased composition (basic and acidic residues). Polar residues predominate over residues 77–87 (SFRSHNSSDPP). Composition is skewed to basic and acidic residues over residues 91-112 (KASDSLRSRKGIEPLEPRKTSD) and 127-136 (ERQEDGKDDL). 8 THEG repeats span residues 172-190 (KKCFYSRKRVQDLSKPKKQ), 212-231 (AALKAKLSKRIEDLAQPRLV), 258-277 (PALVTRPSKRIQKLAKPNKF), 291-310 (TTRYSDPSPRILRLSIAKGT), 327-346 (STLSAVATPRIVDLAHPRIK), 367-386 (AALLANPSKRTIFLAKSKRV), 403-422 (AATHSQVSERVQELANPHTR), and 440-459 (SALKAHCSDRVKELAEPIVR).

This is Sperm microtubule associated protein 2-like from Mus musculus (Mouse).